The following is a 148-amino-acid chain: Putative anti-anti-sigma factor Rv2638 (148 aa).

The STAS domain occupies 30 to 141 (LRATTDGSGA…PTVDTALGKG (112 aa)).

Belongs to the anti-sigma-factor antagonist family. In terms of assembly, interacts with unphosphorylated OprA.

This is Putative anti-anti-sigma factor Rv2638 from Mycobacterium tuberculosis (strain ATCC 25618 / H37Rv).